A 190-amino-acid chain; its full sequence is Segregation and condensation protein B (190 aa).

Belongs to the ScpB family. In terms of assembly, homodimer. Homodimerization may be required to stabilize the binding of ScpA to the Smc head domains. Component of a cohesin-like complex composed of ScpA, ScpB and the Smc homodimer, in which ScpA and ScpB bind to the head domain of Smc. The presence of the three proteins is required for the association of the complex with DNA.

Its subcellular location is the cytoplasm. Functionally, participates in chromosomal partition during cell division. May act via the formation of a condensin-like complex containing Smc and ScpA that pull DNA away from mid-cell into both cell halves. The chain is Segregation and condensation protein B from Bacillus cereus (strain B4264).